A 389-amino-acid polypeptide reads, in one-letter code: 8-amino-7-oxononanoate synthase (389 aa).

Arginine 31 contacts substrate. 109–110 (GY) contacts pyridoxal 5'-phosphate. Residue histidine 134 coordinates substrate. Pyridoxal 5'-phosphate-binding positions include serine 180, 205–208 (DEAH), and 236–239 (TLSK). An N6-(pyridoxal phosphate)lysine modification is found at lysine 239. A substrate-binding site is contributed by threonine 349.

The protein belongs to the class-II pyridoxal-phosphate-dependent aminotransferase family. BioF subfamily. As to quaternary structure, homodimer. It depends on pyridoxal 5'-phosphate as a cofactor.

The catalysed reaction is 6-carboxyhexanoyl-[ACP] + L-alanine + H(+) = (8S)-8-amino-7-oxononanoate + holo-[ACP] + CO2. It functions in the pathway cofactor biosynthesis; biotin biosynthesis. Its function is as follows. Catalyzes the decarboxylative condensation of pimeloyl-[acyl-carrier protein] and L-alanine to produce 8-amino-7-oxononanoate (AON), [acyl-carrier protein], and carbon dioxide. The protein is 8-amino-7-oxononanoate synthase of Mycobacterium marinum (strain ATCC BAA-535 / M).